Reading from the N-terminus, the 201-residue chain is Probable nicotinate-nucleotide adenylyltransferase (201 aa).

Positions 182–201 (GPESSQSATSIRERGGWSLR) are disordered. A compositionally biased stretch (basic and acidic residues) spans 192 to 201 (IRERGGWSLR).

The protein belongs to the NadD family.

The catalysed reaction is nicotinate beta-D-ribonucleotide + ATP + H(+) = deamido-NAD(+) + diphosphate. The protein operates within cofactor biosynthesis; NAD(+) biosynthesis; deamido-NAD(+) from nicotinate D-ribonucleotide: step 1/1. Its function is as follows. Catalyzes the reversible adenylation of nicotinate mononucleotide (NaMN) to nicotinic acid adenine dinucleotide (NaAD). The polypeptide is Probable nicotinate-nucleotide adenylyltransferase (Parvibaculum lavamentivorans (strain DS-1 / DSM 13023 / NCIMB 13966)).